We begin with the raw amino-acid sequence, 527 residues long: Optineurin (527 aa).

Disordered stretches follow at residues methionine 1–leucine 32 and serine 101–leucine 143. Residues glutamate 38 to serine 170 adopt a coiled-coil conformation. Residues methionine 58–arginine 209 are interaction with Rab8. Positions aspartate 176 to isoleucine 181 match the LIR motif. Residue serine 177 is modified to Phosphoserine; by TBK1. Basic and acidic residues predominate over residues glycine 186–histidine 197. 2 disordered regions span residues glycine 186–tyrosine 214 and serine 262–leucine 292. A Phosphoserine modification is found at serine 198. A compositionally biased stretch (polar residues) spans proline 201–alanine 210. Residues cysteine 239–aspartate 458 adopt a coiled-coil conformation. Basic and acidic residues-rich tracts occupy residues serine 262 to isoleucine 274 and serine 281 to leucine 292. Residues threonine 361–isoleucine 527 are interaction with HD. The tract at residues arginine 362 to arginine 470 is interaction with MYO6. Positions aspartate 424–arginine 429 match the UBAN motif. Serine 476 is subject to Phosphoserine. A CCHC NOA-type zinc finger spans residues glutamine 497 to isoleucine 527. Zn(2+) contacts are provided by cysteine 505, cysteine 508, histidine 521, and cysteine 525.

As to quaternary structure, self-associates. Interacts with HD. Interacts with GTF3A. Interacts with MYO6. Interacts (via UBAN) with ubiquitinated TFRC. Interacts with GTP-bound Rab8 (RAB8A and/or RAB8B). Interacts with TBC1D17. Interacts with TBK1. Interacts with TRAF3. Binds to linear ubiquitin chains. Interacts with LC3 family members MAP1LC3A, MAP1LC3B, GABARAP, GABARAPL1 and GABARAPL2; OPTN phosphorylation increases the association (at least with MAP1LC3B). Interacts with RAB12; the interaction may be indirect. Interacts with TBK1; this interaction leads to the Golgi localization of TBK1 and its subsequent activation. Interacts with palmitoyltransferase ZDHHC17/HIP14; the interaction does not lead to palmitoylation of OPTN. Interacts with CYLD. Interacts with TOM1; the interaction is indirect and is mediated by MYO6, which acts as a bridge between TOM1 and OPTN. Interacts with USP12; the interaction is independent of USP12 deubiquitinase activity and may be involved in regulation of autophagic flux. In terms of processing, phosphorylated by TBK1, leading to restrict bacterial proliferation in case of infection.

The protein resides in the cytoplasm. Its subcellular location is the perinuclear region. It is found in the golgi apparatus. It localises to the trans-Golgi network. The protein localises to the cytoplasmic vesicle. The protein resides in the autophagosome. Its subcellular location is the recycling endosome. Plays an important role in the maintenance of the Golgi complex, in membrane trafficking, in exocytosis, through its interaction with myosin VI and Rab8. Links myosin VI to the Golgi complex and plays an important role in Golgi ribbon formation. Negatively regulates the induction of IFNB in response to RNA virus infection. Plays a neuroprotective role in the eye and optic nerve. Probably part of the TNF-alpha signaling pathway that can shift the equilibrium toward induction of cell death. May act by regulating membrane trafficking and cellular morphogenesis via a complex that contains Rab8 and huntingtin (HD). Mediates the interaction of Rab8 with the probable GTPase-activating protein TBC1D17 during Rab8-mediated endocytic trafficking, such as that of transferrin receptor (TFRC/TfR); regulates Rab8 recruitment to tubules emanating from the endocytic recycling compartment. Autophagy receptor that interacts directly with both the cargo to become degraded and an autophagy modifier of the MAP1 LC3 family; targets ubiquitin-coated bacteria (xenophagy) and appears to function in the same pathway as SQSTM1 and CALCOCO2/NDP52. The chain is Optineurin (OPTN) from Pongo abelii (Sumatran orangutan).